Here is a 669-residue protein sequence, read N- to C-terminus: uncharacterized protein (669 aa).

The next 12 helical transmembrane spans lie at 9 to 29 (PLVIGVTLFFILLLMAMIFIA), 48 to 68 (FSWFYVLTFSVFLGFLLILSV), 87 to 107 (FLSWLAMLFAAGMGVGLMFFG), 139 to 159 (WGIHAWAVYGTIALALAYFGF), 186 to 206 (AIDVMALLATLFGIITTLGFG), 224 to 244 (SFALQVGVIVVVMCLAVFSAI), 259 to 279 (LTLAFCLLLFVLISGPTLYLL), 314 to 334 (WTVLYWAWWCSWAPFVGLFIA), 345 to 365 (FIFGVLVIPSLFGILWFTVFG), 397 to 417 (YLPLPTITGFVSLLVILLFFI), 444 to 464 (AIMWGTLMSVVAIVLMQSGGL), and 470 to 490 (MTLIVALPFALLMLVMCFSLW).

This sequence belongs to the BCCT transporter (TC 2.A.15) family.

Its subcellular location is the cell inner membrane. This is an uncharacterized protein from Haemophilus influenzae (strain ATCC 51907 / DSM 11121 / KW20 / Rd).